The primary structure comprises 305 residues: Coenzyme PQQ synthesis protein B (305 aa).

This sequence belongs to the PqqB family.

It participates in cofactor biosynthesis; pyrroloquinoline quinone biosynthesis. Its function is as follows. May be involved in the transport of PQQ or its precursor to the periplasm. This Cupriavidus taiwanensis (strain DSM 17343 / BCRC 17206 / CCUG 44338 / CIP 107171 / LMG 19424 / R1) (Ralstonia taiwanensis (strain LMG 19424)) protein is Coenzyme PQQ synthesis protein B.